The following is a 295-amino-acid chain: Ribosomal protein L11 methyltransferase (295 aa).

4 residues coordinate S-adenosyl-L-methionine: threonine 139, glycine 166, aspartate 188, and asparagine 231.

The protein belongs to the methyltransferase superfamily. PrmA family.

The protein resides in the cytoplasm. It carries out the reaction L-lysyl-[protein] + 3 S-adenosyl-L-methionine = N(6),N(6),N(6)-trimethyl-L-lysyl-[protein] + 3 S-adenosyl-L-homocysteine + 3 H(+). Functionally, methylates ribosomal protein L11. The sequence is that of Ribosomal protein L11 methyltransferase from Cyanothece sp. (strain PCC 7425 / ATCC 29141).